A 209-amino-acid polypeptide reads, in one-letter code: Large ribosomal subunit protein uL4 (209 aa).

Belongs to the universal ribosomal protein uL4 family. In terms of assembly, part of the 50S ribosomal subunit.

In terms of biological role, one of the primary rRNA binding proteins, this protein initially binds near the 5'-end of the 23S rRNA. It is important during the early stages of 50S assembly. It makes multiple contacts with different domains of the 23S rRNA in the assembled 50S subunit and ribosome. Functionally, forms part of the polypeptide exit tunnel. The sequence is that of Large ribosomal subunit protein uL4 from Borrelia duttonii (strain Ly).